The primary structure comprises 478 residues: Stromelysin-1 (478 aa).

The N-terminal stretch at 1 to 17 (MQNLPALLLFCGVVCSA) is a signal peptide. Positions 18 to 99 (YPVDRAAEDE…PRCGVPDVGD (82 aa)) are cleaved as a propeptide — activation peptide. Positions 90–97 (PRCGVPDV) match the Cysteine switch motif. Cysteine 92 contacts Zn(2+). Aspartate 124 and aspartate 158 together coordinate Ca(2+). Histidine 168 and aspartate 170 together coordinate Zn(2+). Aspartate 175, glycine 176, glycine 178, and valine 180 together coordinate Ca(2+). Histidine 183 contributes to the Zn(2+) binding site. Ca(2+) contacts are provided by glycine 190 and aspartate 194. Histidine 196 provides a ligand contact to Zn(2+). 3 residues coordinate Ca(2+): aspartate 198, aspartate 199, and glutamate 201. Histidine 218 is a Zn(2+) binding site. Glutamate 219 is a catalytic residue. Zn(2+) contacts are provided by histidine 222 and histidine 228. Residues 260–286 (QSLYGGPPSDSSNDPVVPTESVPPGPG) are disordered. The segment covering 266–277 (PPSDSSNDPVVP) has biased composition (low complexity). Hemopexin repeat units follow at residues 288 to 337 (PAAC…WPSL), 338 to 384 (PSGL…GFPP), 386 to 434 (VKKI…FPGV), and 435 to 478 (DSKV…WLNC). Cysteine 291 and cysteine 478 are joined by a disulfide. Aspartate 298 contributes to the Ca(2+) binding site. Ca(2+) contacts are provided by aspartate 390 and aspartate 439. An N-linked (GlcNAc...) asparagine glycan is attached at asparagine 452.

The protein belongs to the peptidase M10A family. The cofactor is Ca(2+). Zn(2+) is required as a cofactor.

The protein resides in the secreted. The protein localises to the extracellular space. Its subcellular location is the extracellular matrix. It carries out the reaction Preferential cleavage where P1', P2' and P3' are hydrophobic residues.. Functionally, metalloproteinase with a rather broad substrate specificity that can degrade fibronectin, laminin, gelatins of type I, III, IV, and V; collagens III, IV, X, and IX, and cartilage proteoglycans. Activates different molecules including growth factors, plasminogen or other matrix metalloproteinases such as MMP9. Once released into the extracellular matrix (ECM), the inactive pro-enzyme is activated by the plasmin cascade signaling pathway. Also acts intracellularly. For example, in dopaminergic neurons, gets activated by the serine protease HTRA2 upon stress and plays a pivotal role in DA neuronal degeneration by mediating microglial activation and alpha-synuclein/SNCA cleavage. In addition, plays a role in immune response and possesses antiviral activity against various viruses. Mechanistically, translocates from the cytoplasm into the cell nucleus upon virus infection to influence NF-kappa-B activities. The sequence is that of Stromelysin-1 (MMP3) from Canis lupus familiaris (Dog).